Here is a 226-residue protein sequence, read N- to C-terminus: tRNA (guanine-N(7)-)-methyltransferase (226 aa).

A disordered region spans residues 1–22; sequence MTTPQQPHGPLRSFGRLKSRPV. The S-adenosyl-L-methionine site is built by glutamate 59, glutamate 84, aspartate 111, and aspartate 133. Residue aspartate 133 is part of the active site. Substrate is bound at residue lysine 137. The interval 139–144 is interaction with RNA; it reads RHNKRR. Residues aspartate 169 and 206–209 contribute to the substrate site; that span reads TRYE.

Belongs to the class I-like SAM-binding methyltransferase superfamily. TrmB family.

The enzyme catalyses guanosine(46) in tRNA + S-adenosyl-L-methionine = N(7)-methylguanosine(46) in tRNA + S-adenosyl-L-homocysteine. It functions in the pathway tRNA modification; N(7)-methylguanine-tRNA biosynthesis. Functionally, catalyzes the formation of N(7)-methylguanine at position 46 (m7G46) in tRNA. This chain is tRNA (guanine-N(7)-)-methyltransferase, found in Caulobacter vibrioides (strain ATCC 19089 / CIP 103742 / CB 15) (Caulobacter crescentus).